The following is a 111-amino-acid chain: Universal stress protein B (111 aa).

A run of 2 helical transmembrane segments spans residues 1 to 21 (MINTVALFWALFIVCVVNMLR) and 90 to 110 (FILTSALCGLVVVALIALMLW).

It belongs to the universal stress protein B family.

Its subcellular location is the cell inner membrane. In Edwardsiella ictaluri (strain 93-146), this protein is Universal stress protein B.